The sequence spans 115 residues: Nitrogenase-stabilizing/protective protein NifW (115 aa).

It belongs to the NifW family. Homotrimer; associates with NifD.

Functionally, may protect the nitrogenase Fe-Mo protein from oxidative damage. In Rhodopseudomonas palustris (strain BisB18), this protein is Nitrogenase-stabilizing/protective protein NifW.